Here is a 305-residue protein sequence, read N- to C-terminus: Olfactory receptor 4X1 (305 aa).

At Met1–Arg23 the chain is on the extracellular side. Residues Asn6 and Asn18 are each glycosylated (N-linked (GlcNAc...) asparagine). The helical transmembrane segment at Val24 to Ile47 threads the bilayer. The Cytoplasmic portion of the chain corresponds to Leu48–Ser55. A helical membrane pass occupies residues Pro56–Pro77. The Extracellular portion of the chain corresponds to Lys78 to Gln98. A disulfide bond links Cys95 and Cys187. A helical membrane pass occupies residues Met99 to Tyr118. Residues Asp119–Arg137 lie on the Cytoplasmic side of the membrane. A helical transmembrane segment spans residues Met138 to Gly156. Residues Gln157 to Ile193 are Extracellular-facing. Residues Ser194–Leu217 form a helical membrane-spanning segment. Topologically, residues Ile218–Lys233 are cytoplasmic. A helical transmembrane segment spans residues Ala234–Tyr256. Over Ile257–Lys267 the chain is Extracellular. A helical membrane pass occupies residues Ile268–Phe287. At Arg288–Ile305 the chain is on the cytoplasmic side.

Belongs to the G-protein coupled receptor 1 family.

Its subcellular location is the cell membrane. Odorant receptor. This is Olfactory receptor 4X1 (OR4X1) from Homo sapiens (Human).